The primary structure comprises 311 residues: Ribonuclease Z (311 aa).

H61, H63, D65, H66, H139, D210, and H268 together coordinate Zn(2+). D65 serves as the catalytic Proton acceptor.

This sequence belongs to the RNase Z family. In terms of assembly, homodimer. Requires Zn(2+) as cofactor.

The enzyme catalyses Endonucleolytic cleavage of RNA, removing extra 3' nucleotides from tRNA precursor, generating 3' termini of tRNAs. A 3'-hydroxy group is left at the tRNA terminus and a 5'-phosphoryl group is left at the trailer molecule.. Zinc phosphodiesterase, which displays some tRNA 3'-processing endonuclease activity. Probably involved in tRNA maturation, by removing a 3'-trailer from precursor tRNA. The polypeptide is Ribonuclease Z (Haloarcula marismortui (strain ATCC 43049 / DSM 3752 / JCM 8966 / VKM B-1809) (Halobacterium marismortui)).